Consider the following 431-residue polypeptide: Adenylosuccinate synthetase (431 aa).

GTP contacts are provided by residues 13–19 (GDEGKGK) and 41–43 (GHT). Asp14 (proton acceptor) is an active-site residue. Residues Asp14 and Gly41 each coordinate Mg(2+). IMP-binding positions include 14-17 (DEGK), 39-42 (NAGH), Thr130, Arg144, Gln225, Thr240, and Arg304. The active-site Proton donor is the His42. 300 to 306 (AVTGRPR) contacts substrate. GTP-binding positions include Arg306, 332–334 (KLD), and 415–417 (STG).

This sequence belongs to the adenylosuccinate synthetase family. As to quaternary structure, homodimer. The cofactor is Mg(2+).

It localises to the cytoplasm. The enzyme catalyses IMP + L-aspartate + GTP = N(6)-(1,2-dicarboxyethyl)-AMP + GDP + phosphate + 2 H(+). It participates in purine metabolism; AMP biosynthesis via de novo pathway; AMP from IMP: step 1/2. Functionally, plays an important role in the de novo pathway of purine nucleotide biosynthesis. Catalyzes the first committed step in the biosynthesis of AMP from IMP. In Legionella pneumophila subsp. pneumophila (strain Philadelphia 1 / ATCC 33152 / DSM 7513), this protein is Adenylosuccinate synthetase.